Reading from the N-terminus, the 397-residue chain is 4-O-methyl-glucuronoyl methylesterase (397 aa).

Positions 1–18 (MVHLTSALLVAGAAFAAA) are cleaved as a signal peptide. 3 disulfides stabilise this stretch: Cys31–Cys65, Cys212–Cys347, and Cys244–Cys319. The GXSYXG catalytic site motif signature appears at 211 to 216 (GCSRNG). The Nucleophile role is filled by Ser213. Substrate contacts are provided by Lys217, Gln259, Glu267, and Trp310. His346 (proton donor/acceptor) is an active-site residue.

Belongs to the carbohydrate esterase 15 (CE15) family.

The protein resides in the secreted. It catalyses the reaction a 4-O-methyl-alpha-D-glucuronosyl ester derivative + H2O = 4-O-methyl-alpha-D-glucuronate derivative + an alcohol + H(+). In terms of biological role, glucuronoyl esterase which may play a significant role in biomass degradation, as it is considered to disconnect hemicellulose from lignin through the hydrolysis of the ester bond between 4-O-methyl-D-glucuronic acid residues of glucuronoxylans and aromatic alcohols of lignin. This is 4-O-methyl-glucuronoyl methylesterase (ge2) from Thermothelomyces thermophilus (strain ATCC 42464 / BCRC 31852 / DSM 1799) (Sporotrichum thermophile).